Reading from the N-terminus, the 213-residue chain is Probable GTP-binding protein EngB (213 aa).

Residues 30–204 (EGFEVAFAGR…YTVLAGWMEL (175 aa)) form the EngB-type G domain. GTP-binding positions include 38–45 (GRSNAGKS), 64–68 (GRTQL), 82–85 (DLPG), 149–152 (TKAD), and 182–185 (LFSA). Residues S45 and T66 each coordinate Mg(2+).

Belongs to the TRAFAC class TrmE-Era-EngA-EngB-Septin-like GTPase superfamily. EngB GTPase family. Requires Mg(2+) as cofactor.

Necessary for normal cell division and for the maintenance of normal septation. In Pseudomonas fluorescens (strain ATCC BAA-477 / NRRL B-23932 / Pf-5), this protein is Probable GTP-binding protein EngB.